The following is a 256-amino-acid chain: Deoxyribose-phosphate aldolase (256 aa).

D102 functions as the Proton donor/acceptor in the catalytic mechanism. K165 acts as the Schiff-base intermediate with acetaldehyde in catalysis. K197 functions as the Proton donor/acceptor in the catalytic mechanism.

Belongs to the DeoC/FbaB aldolase family. DeoC type 2 subfamily.

It localises to the cytoplasm. The enzyme catalyses 2-deoxy-D-ribose 5-phosphate = D-glyceraldehyde 3-phosphate + acetaldehyde. Its pathway is carbohydrate degradation; 2-deoxy-D-ribose 1-phosphate degradation; D-glyceraldehyde 3-phosphate and acetaldehyde from 2-deoxy-alpha-D-ribose 1-phosphate: step 2/2. Catalyzes a reversible aldol reaction between acetaldehyde and D-glyceraldehyde 3-phosphate to generate 2-deoxy-D-ribose 5-phosphate. This chain is Deoxyribose-phosphate aldolase, found in Shewanella sp. (strain MR-7).